A 376-amino-acid polypeptide reads, in one-letter code: MEVPRLSQHMSTPNSPCEEMIKNLSLENIQLCERDGNKSQDSGIAEMEELPVPHNIKISNITCDSFKISWDMDPKSKDRITHYFVDLNKKENKNSNKFKHKDVPTKLVAKAVPLPMTVRGHWFLSPRTEYTVAVQTASKQVDGDYAVSEWSEIIEFCTADYSKVHLTQLMEKAEAIAGRMLKFSVFYRNQHKEYFDYIREHHGNVMQPSPKDNSGSHGSPISAKLEGIFFSCNTEFNTGKPQQDSPYGRYRVEIPAEKLFNPNTNLYFGDFYCMYTAYHYVILVIAPMGSPGDEFCKQRLPQLSLSDNKFLTCTQEHDGLVFHQAQDVILEVIYTDPVDLSWGNVAEIIGHQLMSLSTADAKKDPSCKTCNISVGR.

A Fibronectin type-III domain is found at 52-161 (VPHNIKISNI…EIIEFCTADY (110 aa)).

This sequence belongs to the PHYHIP family.

Its function is as follows. May play a role in the development of the central system. The polypeptide is Phytanoyl-CoA hydroxylase-interacting protein-like (phyhipl) (Xenopus laevis (African clawed frog)).